The primary structure comprises 302 residues: Probable alpha-L-glutamate ligase (302 aa).

The ATP-grasp domain maps to 104–287; the sequence is LQLLSRKGLG…IAGQIIEYIE (184 aa). Residues K141, 178–179, D187, and 211–213 each bind ATP; these read EY and RSN. Residues D248, E260, and N262 each coordinate Mg(2+). The Mn(2+) site is built by D248, E260, and N262.

Belongs to the RimK family. Requires Mg(2+) as cofactor. Mn(2+) is required as a cofactor.

This is Probable alpha-L-glutamate ligase from Chromohalobacter salexigens (strain ATCC BAA-138 / DSM 3043 / CIP 106854 / NCIMB 13768 / 1H11).